The primary structure comprises 808 residues: DNA gyrase subunit B (808 aa).

A Toprim domain is found at 429–544; that stretch reads SELFIVEGDS…KGYLYIAQPP (116 aa). The Mg(2+) site is built by E435, D509, and D511.

It belongs to the type II topoisomerase GyrB family. In terms of assembly, heterotetramer, composed of two GyrA and two GyrB chains. In the heterotetramer, GyrA contains the active site tyrosine that forms a transient covalent intermediate with DNA, while GyrB binds cofactors and catalyzes ATP hydrolysis. Requires Mg(2+) as cofactor. The cofactor is Mn(2+). It depends on Ca(2+) as a cofactor.

It localises to the cytoplasm. The enzyme catalyses ATP-dependent breakage, passage and rejoining of double-stranded DNA.. In terms of biological role, a type II topoisomerase that negatively supercoils closed circular double-stranded (ds) DNA in an ATP-dependent manner to modulate DNA topology and maintain chromosomes in an underwound state. Negative supercoiling favors strand separation, and DNA replication, transcription, recombination and repair, all of which involve strand separation. Also able to catalyze the interconversion of other topological isomers of dsDNA rings, including catenanes and knotted rings. Type II topoisomerases break and join 2 DNA strands simultaneously in an ATP-dependent manner. The protein is DNA gyrase subunit B of Rickettsia bellii (strain RML369-C).